Reading from the N-terminus, the 148-residue chain is UPF0260 protein Sfri_1740 (148 aa).

It belongs to the UPF0260 family.

The chain is UPF0260 protein Sfri_1740 from Shewanella frigidimarina (strain NCIMB 400).